A 261-amino-acid chain; its full sequence is 3-methyl-2-oxobutanoate hydroxymethyltransferase (261 aa).

Residues aspartate 42 and aspartate 81 each coordinate Mg(2+). 3-methyl-2-oxobutanoate contacts are provided by residues 42 to 43 (DS), aspartate 81, and lysine 110. Residue glutamate 112 participates in Mg(2+) binding. Glutamate 179 functions as the Proton acceptor in the catalytic mechanism.

Belongs to the PanB family. In terms of assembly, homodecamer; pentamer of dimers. The cofactor is Mg(2+).

It is found in the cytoplasm. The enzyme catalyses 3-methyl-2-oxobutanoate + (6R)-5,10-methylene-5,6,7,8-tetrahydrofolate + H2O = 2-dehydropantoate + (6S)-5,6,7,8-tetrahydrofolate. It functions in the pathway cofactor biosynthesis; (R)-pantothenate biosynthesis; (R)-pantoate from 3-methyl-2-oxobutanoate: step 1/2. Catalyzes the reversible reaction in which hydroxymethyl group from 5,10-methylenetetrahydrofolate is transferred onto alpha-ketoisovalerate to form ketopantoate. The chain is 3-methyl-2-oxobutanoate hydroxymethyltransferase from Thermus thermophilus (strain ATCC 27634 / DSM 579 / HB8).